A 507-amino-acid chain; its full sequence is Subtilisin-like protease 1 (507 aa).

Positions 1–19 (MGVFRFISISLAAVSAANA) are cleaved as a signal peptide. Positions 20–116 (AQILSMPHAQ…VEPDTIISVN (97 aa)) are excised as a propeptide. Residues 34 to 113 (SYIVMMKDDT…VMFVEPDTII (80 aa)) form the Inhibitor I9 domain. The Peptidase S8 domain occupies 126–400 (SWGLARISNS…NVLISNGGAK (275 aa)). Residues aspartate 158 and histidine 190 each act as charge relay system in the active site. The interval 175–198 (GSNQVNDGDDRDGSGHGTHTSGTM) is disordered. A glycan (N-linked (GlcNAc...) asparagine) is linked at asparagine 251. A compositionally biased stretch (polar residues) spans 282 to 294 (NENQDARSSSPAS). The tract at residues 282–312 (NENQDARSSSPASEPSVCTVGSSAEDDSRSS) is disordered. Serine 345 acts as the Charge relay system in catalysis. Residues 378-394 (SSSITDVGPGTPTNVLI) are compositionally biased toward polar residues. Positions 378–486 (SSSITDVGPG…YPGGDNFDFD (109 aa)) are disordered. Pro residues-rich tracts occupy residues 405-428 (KPAP…PSQP) and 438-449 (EPFPGEPFPGEP). Over residues 450-461 (FPGESSPGESAP) the composition is skewed to low complexity. Pro residues predominate over residues 462-476 (APAPMPPSPQHPHTP).

This sequence belongs to the peptidase S8 family.

It localises to the secreted. Secreted subtilisin-like serine protease with keratinolytic activity that contributes to pathogenicity. In Trichophyton tonsurans (Scalp ringworm fungus), this protein is Subtilisin-like protease 1 (SUB1).